The chain runs to 443 residues: D-alanyl-D-alanine carboxypeptidase DacA (443 aa).

Positions 1 to 31 are cleaved as a signal peptide; it reads MNIKKCKQLLMSLVVLTLAVTCLAPMSKAKA. The active-site Acyl-ester intermediate is the Ser-67. The Proton acceptor role is filled by Lys-70. Ser-131 is a catalytic residue. Lys-258 contacts substrate.

This sequence belongs to the peptidase S11 family.

Its subcellular location is the secreted. It is found in the cell wall. The protein resides in the cell membrane. It localises to the membrane raft. The enzyme catalyses Preferential cleavage: (Ac)2-L-Lys-D-Ala-|-D-Ala. Also transpeptidation of peptidyl-alanyl moieties that are N-acyl substituents of D-alanine.. It participates in cell wall biogenesis; peptidoglycan biosynthesis. Removes C-terminal D-alanyl residues from sugar-peptide cell wall precursors. In Bacillus subtilis (strain 168), this protein is D-alanyl-D-alanine carboxypeptidase DacA (dacA).